The chain runs to 870 residues: Linoleate 9S-lipoxygenase 2 (870 aa).

The region spanning 32–158 (NDFGATVIDG…KYRYNRVFFS (127 aa)) is the PLAT domain. The region spanning 161–870 (TSLPSKMPAA…ARGIPNSISI (710 aa)) is the Lipoxygenase domain. Residues 203–243 (YNDLGEPDSGNPRPVLGGSPDRPYPRRGRTGRKPTKTDPTA) form a disordered region. Basic residues predominate over residues 227–236 (PRRGRTGRKP). The Fe cation site is built by histidine 525, histidine 530, histidine 716, asparagine 720, and isoleucine 870.

The protein belongs to the lipoxygenase family. In terms of assembly, monomer. Requires Fe cation as cofactor.

The protein resides in the cytoplasm. It carries out the reaction (9Z,12Z)-octadecadienoate + O2 = (9S)-hydroperoxy-(10E,12Z)-octadecadienoate. It participates in lipid metabolism; oxylipin biosynthesis. Plant lipoxygenase may be involved in a number of diverse aspects of plant physiology including growth and development, pest resistance, and senescence or responses to wounding. Catalyzes the hydroperoxidation of lipids containing a cis,cis-1,4-pentadiene structure. The chain is Linoleate 9S-lipoxygenase 2 (LOX1.1) from Oryza sativa subsp. japonica (Rice).